The chain runs to 58 residues: UPF0391 membrane protein COXBURSA331_A2131 (58 aa).

2 consecutive transmembrane segments (helical) span residues 3–23 and 30–50; these read FWVL…FTGI and IAKI…IAML.

It belongs to the UPF0391 family.

It is found in the cell membrane. In Coxiella burnetii (strain RSA 331 / Henzerling II), this protein is UPF0391 membrane protein COXBURSA331_A2131.